The following is a 931-amino-acid chain: G patch domain-containing protein 1 (931 aa).

Residues 1 to 12 (MAALDSDSDEDL) show a composition bias toward acidic residues. Disordered stretches follow at residues 1–41 (MAAL…TVRD), 72–92 (TPSS…LGPE), and 169–213 (QGIG…YLPE). N-acetylalanine is present on alanine 2. Serine 6 and serine 8 each carry phosphoserine. A compositionally biased stretch (polar residues) spans 72-81 (TPSSFVSSRQ). One can recognise a G-patch domain in the interval 152–198 (KLSVGFELLRKMGWKEGQGIGPRVKRRPRRQKPDPGVKIYGCALPPG). Positions 202–211 (GSEDEDDDYL) are enriched in acidic residues. Lysine 313 is covalently cross-linked (Glycyl lysine isopeptide (Lys-Gly) (interchain with G-Cter in SUMO2)). Phosphoserine is present on residues serine 358 and serine 479. 2 disordered regions span residues 567–594 (SRFT…VSDK) and 659–931 (SPVT…LRRQ). Over residues 582 to 593 (EVPRDQENDVSD) the composition is skewed to basic and acidic residues. A compositionally biased stretch (polar residues) spans 659 to 668 (SPVTQASSEK). A compositionally biased stretch (basic and acidic residues) spans 669–695 (VAQHRASDKSRKPSRWDTSKEEKKEDS). Position 715 is a phosphoserine (serine 715). The span at 769–780 (SEDEQGDSEDDQ) shows a compositional bias: acidic residues. Basic and acidic residues predominate over residues 781–792 (EGTREADFKSSQ). Positions 852-888 (EKHKKNKEKHKTKKEHRRKKEKKKKHRKHKHKGKQKN) are enriched in basic residues. Residues 896–905 (SSESTDSSDS) show a composition bias toward low complexity. Residues 922–931 (RLKRLPLRRQ) are compositionally biased toward basic residues.

This sequence belongs to the GPATCH1 family.

This is G patch domain-containing protein 1 (GPATCH1) from Bos taurus (Bovine).